Reading from the N-terminus, the 104-residue chain is Pterin-4-alpha-carbinolamine dehydratase (104 aa).

Ala-2 carries the N-acetylalanine modification. Residues 61 to 63 (DHH) and 78 to 81 (STHD) each bind substrate.

Belongs to the pterin-4-alpha-carbinolamine dehydratase family. In terms of assembly, homotetramer and homodimer.

Its subcellular location is the cytoplasm. It is found in the nucleus. It catalyses the reaction (4aS,6R)-4a-hydroxy-L-erythro-5,6,7,8-tetrahydrobiopterin = (6R)-L-erythro-6,7-dihydrobiopterin + H2O. Functionally, involved in tetrahydrobiopterin biosynthesis. Seems to both prevent the formation of 7-pterins and accelerate the formation of quinonoid-BH2. Coactivator for HNF1A-dependent transcription. Regulates the dimerization of homeodomain protein HNF1A and enhances its transcriptional activity. Also acts as a coactivator for HNF1B-dependent transcription. The polypeptide is Pterin-4-alpha-carbinolamine dehydratase (pcbd) (Xenopus laevis (African clawed frog)).